The sequence spans 445 residues: Glycine--tRNA ligase (445 aa).

Residues arginine 97 and glutamate 145 each coordinate substrate. Residues 177-179 (RNE), 187-192 (FRTCEF), 262-263 (EV), and 308-311 (GLTR) each bind ATP. 192-196 (FEQME) lines the substrate pocket. 304-308 (ETSAG) lines the substrate pocket.

Belongs to the class-II aminoacyl-tRNA synthetase family. As to quaternary structure, homodimer.

Its subcellular location is the cytoplasm. The catalysed reaction is tRNA(Gly) + glycine + ATP = glycyl-tRNA(Gly) + AMP + diphosphate. Catalyzes the attachment of glycine to tRNA(Gly). This Borrelia garinii subsp. bavariensis (strain ATCC BAA-2496 / DSM 23469 / PBi) (Borreliella bavariensis) protein is Glycine--tRNA ligase.